A 158-amino-acid polypeptide reads, in one-letter code: NADH-quinone oxidoreductase subunit B (158 aa).

The [4Fe-4S] cluster site is built by cysteine 37, cysteine 38, cysteine 102, and cysteine 132.

It belongs to the complex I 20 kDa subunit family. In terms of assembly, NDH-1 is composed of 14 different subunits. Subunits NuoB, C, D, E, F, and G constitute the peripheral sector of the complex. Requires [4Fe-4S] cluster as cofactor.

It localises to the cell inner membrane. The enzyme catalyses a quinone + NADH + 5 H(+)(in) = a quinol + NAD(+) + 4 H(+)(out). Its function is as follows. NDH-1 shuttles electrons from NADH, via FMN and iron-sulfur (Fe-S) centers, to quinones in the respiratory chain. Couples the redox reaction to proton translocation (for every two electrons transferred, four hydrogen ions are translocated across the cytoplasmic membrane), and thus conserves the redox energy in a proton gradient. The chain is NADH-quinone oxidoreductase subunit B from Bordetella petrii (strain ATCC BAA-461 / DSM 12804 / CCUG 43448).